The sequence spans 221 residues: Inositol phosphorylceramide synthase regulatory subunit KEI1 (221 aa).

A run of 4 helical transmembrane segments spans residues 11 to 31, 54 to 74, 79 to 99, and 154 to 174; these read SFLG…ISIL, WIAY…LYLI, LLVF…TCFF, and ILIT…LASF. Residues 176 to 221 form a COPI vesicle-binding region; it reads QELLHHPKYLVDRDDVEQNLKNKPIWKRLWAKSQKGCYKLCKNLLE.

The protein belongs to the KEI1 family. In terms of assembly, component of the inositol phosphorylceramide synthase complex composed of at least AUR1 and KEI1. Interacts (via C-terminal region) with COP1 and SEC21. Note=The interaction with AUR1 seems to occur with the full-length protein before cleavage by KEX2 since both full-length and short chains of KEI1 interact with AUR1. Post-translationally, the precursor protein is cleaved into two polypeptide chains, KEI1N and KEI1C. The cleavage is performed in the Golgi apparatus by the KEX2 protease which recognizes residue Arg-135. Generation of KEX2 cleavage site may have been an accidental event in evolution without specific advantages or disadvantages in IPC synthesis.

Its subcellular location is the golgi apparatus membrane. Functionally, regulatory component of the inositol phosphorylceramide (ICP) synthase which catalyzes the addition of a phosphorylinositol group onto ceramide to form inositol phosphorylceramide, an essential step in sphingolipid biosynthesis. Helps the medial Golgi localization of IPC synthase in a COPI vesicle-dependent manner. This chain is Inositol phosphorylceramide synthase regulatory subunit KEI1 (KEI1), found in Saccharomyces cerevisiae (strain ATCC 204508 / S288c) (Baker's yeast).